A 31-amino-acid polypeptide reads, in one-letter code: Ranatuerin-2PL (31 aa).

A disulfide bond links Cys-23 and Cys-29.

As to expression, expressed by the skin glands.

It is found in the secreted. In terms of biological role, antimicrobial activity against Gram-negative bacterium E.coli. This Lithobates palustris (Pickerel frog) protein is Ranatuerin-2PL.